A 354-amino-acid chain; its full sequence is Uroporphyrinogen decarboxylase (354 aa).

Substrate is bound by residues 27–31 (RQAGR), Asp-77, Tyr-154, Thr-209, and His-327.

The protein belongs to the uroporphyrinogen decarboxylase family. In terms of assembly, homodimer.

Its subcellular location is the cytoplasm. The catalysed reaction is uroporphyrinogen III + 4 H(+) = coproporphyrinogen III + 4 CO2. The protein operates within porphyrin-containing compound metabolism; protoporphyrin-IX biosynthesis; coproporphyrinogen-III from 5-aminolevulinate: step 4/4. Functionally, catalyzes the decarboxylation of four acetate groups of uroporphyrinogen-III to yield coproporphyrinogen-III. The chain is Uroporphyrinogen decarboxylase from Escherichia coli O81 (strain ED1a).